Reading from the N-terminus, the 348-residue chain is uncharacterized protein (348 aa).

Residues 1 to 26 form the signal peptide; that stretch reads MKKRIILLLAVIIAAAAAGVAFYVAK.

This is an uncharacterized protein from Bacillus subtilis (strain 168).